A 289-amino-acid polypeptide reads, in one-letter code: Probable phosphoribulokinase (289 aa).

12-20 (GSSGAGTTT) contacts ATP.

It belongs to the phosphoribulokinase family.

It carries out the reaction D-ribulose 5-phosphate + ATP = D-ribulose 1,5-bisphosphate + ADP + H(+). This Escherichia coli (strain K12) protein is Probable phosphoribulokinase (prkB).